Consider the following 545-residue polypeptide: ATP synthase subunit alpha (545 aa).

173 to 180 (GDRQTGKT) serves as a coordination point for ATP.

This sequence belongs to the ATPase alpha/beta chains family. F-type ATPases have 2 components, CF(1) - the catalytic core - and CF(0) - the membrane proton channel. CF(1) has five subunits: alpha(3), beta(3), gamma(1), delta(1), epsilon(1). CF(0) has three main subunits: a(1), b(2) and c(9-12). The alpha and beta chains form an alternating ring which encloses part of the gamma chain. CF(1) is attached to CF(0) by a central stalk formed by the gamma and epsilon chains, while a peripheral stalk is formed by the delta and b chains.

The protein resides in the cell membrane. The catalysed reaction is ATP + H2O + 4 H(+)(in) = ADP + phosphate + 5 H(+)(out). In terms of biological role, produces ATP from ADP in the presence of a proton gradient across the membrane. The alpha chain is a regulatory subunit. This Clavibacter sepedonicus (Clavibacter michiganensis subsp. sepedonicus) protein is ATP synthase subunit alpha.